Consider the following 273-residue polypeptide: Hemin import ATP-binding protein HmuV (273 aa).

The ABC transporter domain maps to 2–256 (LTAHHLDVAR…AHIAQCYGFA (255 aa)). Residue 34–41 (GRNGAGKS) coordinates ATP.

The protein belongs to the ABC transporter superfamily. Heme (hemin) importer (TC 3.A.1.14.5) family. The complex is composed of two ATP-binding proteins (HmuV), two transmembrane proteins (HmuU) and a solute-binding protein (HmuT).

Its subcellular location is the cell inner membrane. Part of the ABC transporter complex HmuTUV involved in hemin import. Responsible for energy coupling to the transport system. In Burkholderia ambifaria (strain ATCC BAA-244 / DSM 16087 / CCUG 44356 / LMG 19182 / AMMD) (Burkholderia cepacia (strain AMMD)), this protein is Hemin import ATP-binding protein HmuV.